A 518-amino-acid chain; its full sequence is MPNIDLPTLEAFVHAIPQNYKGPGGAVAVVRNGEIVLRHAWGFADLAARKAMTPETRMPICSVSKQFTCAVLLDCIGEPEMLDSALAAYLDQFEDGRPAVRDLCNNQSGLRDYWALTVLCGAAPEGIFLPDQAQNLLRRLKTTHFAPGTHYSYCNGNFRILADLIEQHTGRSLADLLAERIFAPAAMKTAELIPDTALFNECTGYEGDTVRGFLPAINRIHWLGDAGICASLDDMIAWEQFIDRTRHDENGLYRRLSSPQTFADGAPAPYGFGLKFEETGGKRLTGHGGALRGWRCQRWHCADERISTIVMFNFEGNASDAALKMMNAALGIPPAKPVRAQANPGWFGSWLNPETGLVLSLEDAGGGRMKARFGTGPEKMDISGENEAQSSMTTLRRDGDMIHLARKDENLHLAMHRLKGKARQDIAGRYRSDELEADLLLVSEGGAIYGAFEGFLGKSDMYPLYAAGPDVWLLPVQRSMDAPSPGEWKLVFHRDAAGRITGVTVGCWLARGVEYKRL.

The Nucleophile role is filled by Ser62. Lys65 serves as the catalytic Proton donor/acceptor. Positions 373 to 392 (FGTGPEKMDISGENEAQSSM) are disordered. The tract at residues 477-487 (QRSMDAPSPGE) is important for specificity. Asp481 contributes to the substrate binding site.

Belongs to the peptidase S12 family. Homodimer.

The catalysed reaction is Release of an N-terminal D-amino acid from a peptide, Xaa-|-Yaa-, in which Xaa is preferably D-Ala, D-Ser or D-Thr. D-amino acid amides and methyl esters also are hydrolyzed, as is glycine amide.. Its activity is regulated as follows. Inhibited by beta-lactam compounds such as 6-aminopenicillic acid, 7-aminocephalosporanic acid, benzylpenicillin and ampicillin. Inhibited by p-chloromercuribenzoate. Hydrolyzes N-terminal residues in D-amino acid-containing peptides. This is D-aminopeptidase from Brucella melitensis biotype 2 (strain ATCC 23457).